Here is a 61-residue protein sequence, read N- to C-terminus: Small ribosomal subunit protein uS14 (61 aa).

4 residues coordinate Zn(2+): C24, C27, C40, and C43.

This sequence belongs to the universal ribosomal protein uS14 family. Zinc-binding uS14 subfamily. In terms of assembly, part of the 30S ribosomal subunit. Contacts proteins S3 and S10. Zn(2+) is required as a cofactor.

In terms of biological role, binds 16S rRNA, required for the assembly of 30S particles and may also be responsible for determining the conformation of the 16S rRNA at the A site. This is Small ribosomal subunit protein uS14 from Roseiflexus sp. (strain RS-1).